Consider the following 273-residue polypeptide: Large ribosomal subunit protein uL2 (273 aa).

The disordered stretch occupies residues 228–273 (VDHPHGGGEGKTSGGRHPVTPWGFPTKGKKTRKNKRTSKFIVKKRK). The span at 254–273 (KGKKTRKNKRTSKFIVKKRK) shows a compositional bias: basic residues.

Belongs to the universal ribosomal protein uL2 family. As to quaternary structure, part of the 50S ribosomal subunit. Forms a bridge to the 30S subunit in the 70S ribosome.

In terms of biological role, one of the primary rRNA binding proteins. Required for association of the 30S and 50S subunits to form the 70S ribosome, for tRNA binding and peptide bond formation. It has been suggested to have peptidyltransferase activity; this is somewhat controversial. Makes several contacts with the 16S rRNA in the 70S ribosome. The polypeptide is Large ribosomal subunit protein uL2 (Rickettsia massiliae (strain Mtu5)).